Reading from the N-terminus, the 80-residue chain is Putative defensin-like protein 23 (80 aa).

The N-terminal stretch at 1–25 is a signal peptide; that stretch reads MTTTMKIMSFAMLLVLLFSIDVVEG. 4 disulfide bridges follow: Cys-31/Cys-80, Cys-41/Cys-66, Cys-50/Cys-76, and Cys-54/Cys-78.

Belongs to the DEFL family.

The protein localises to the secreted. This chain is Putative defensin-like protein 23, found in Arabidopsis thaliana (Mouse-ear cress).